An 84-amino-acid polypeptide reads, in one-letter code: Small ribosomal subunit protein bS18 (84 aa).

It belongs to the bacterial ribosomal protein bS18 family. In terms of assembly, part of the 30S ribosomal subunit. Forms a tight heterodimer with protein bS6.

Its function is as follows. Binds as a heterodimer with protein bS6 to the central domain of the 16S rRNA, where it helps stabilize the platform of the 30S subunit. In Methylorubrum extorquens (strain CM4 / NCIMB 13688) (Methylobacterium extorquens), this protein is Small ribosomal subunit protein bS18.